The chain runs to 208 residues: Cytochrome c biogenesis ATP-binding export protein CcmA (208 aa).

The region spanning 3–206 (LSGKDLAAHR…LEKFVPSQER (204 aa)) is the ABC transporter domain. Residue 35–42 (GPNGIGKS) coordinates ATP.

It belongs to the ABC transporter superfamily. CcmA exporter (TC 3.A.1.107) family. The complex is composed of two ATP-binding proteins (CcmA) and two transmembrane proteins (CcmB).

It localises to the cell inner membrane. The enzyme catalyses heme b(in) + ATP + H2O = heme b(out) + ADP + phosphate + H(+). In terms of biological role, part of the ABC transporter complex CcmAB involved in the biogenesis of c-type cytochromes; once thought to export heme, this seems not to be the case, but its exact role is uncertain. Responsible for energy coupling to the transport system. This is Cytochrome c biogenesis ATP-binding export protein CcmA from Bartonella quintana (strain Toulouse) (Rochalimaea quintana).